The chain runs to 324 residues: Phospho-N-acetylmuramoyl-pentapeptide-transferase (324 aa).

The next 10 membrane-spanning stretches (helical) occupy residues 9-29, 54-74, 77-97, 117-137, 147-167, 176-196, 201-221, 227-247, 253-273, and 304-324; these read TFAVAFIITVIGVPLFIPFLV, MGAVVFITAMLISFLIFSFIG, VSAATWLLFIALALFGALGFL, FLGQVAISILFYLVYHFSDFA, IEVDLGWFFVIFILFWLVGFS, LDGLVSGLSVIAFSAFGVIAF, MDVAIFCFAIVGGMLGFLLFN, IFMGDTGSLALGGSIAAVSIL, LLLLIGIIFVIETASVILQVF, and VLTFWGIGLVGAVISVCVVIF.

The protein belongs to the glycosyltransferase 4 family. MraY subfamily. Mg(2+) is required as a cofactor.

The protein resides in the cell membrane. It carries out the reaction UDP-N-acetyl-alpha-D-muramoyl-L-alanyl-gamma-D-glutamyl-meso-2,6-diaminopimeloyl-D-alanyl-D-alanine + di-trans,octa-cis-undecaprenyl phosphate = di-trans,octa-cis-undecaprenyl diphospho-N-acetyl-alpha-D-muramoyl-L-alanyl-D-glutamyl-meso-2,6-diaminopimeloyl-D-alanyl-D-alanine + UMP. It functions in the pathway cell wall biogenesis; peptidoglycan biosynthesis. Its function is as follows. Catalyzes the initial step of the lipid cycle reactions in the biosynthesis of the cell wall peptidoglycan: transfers peptidoglycan precursor phospho-MurNAc-pentapeptide from UDP-MurNAc-pentapeptide onto the lipid carrier undecaprenyl phosphate, yielding undecaprenyl-pyrophosphoryl-MurNAc-pentapeptide, known as lipid I. This chain is Phospho-N-acetylmuramoyl-pentapeptide-transferase, found in Listeria welshimeri serovar 6b (strain ATCC 35897 / DSM 20650 / CCUG 15529 / CIP 8149 / NCTC 11857 / SLCC 5334 / V8).